A 385-amino-acid chain; its full sequence is Methionine aminopeptidase 1 (385 aa).

A C6H2-type zinc finger spans residues 6–59; that stretch reads SRVCETEGCSSEAKLQCPTCIKLGIQGSYFCSQECFKGSWATHKLLHKKAKDDK. Residues C9, C14, C22, C25, C36, C40, H48, and H52 each coordinate Zn(2+). H203 provides a ligand contact to a protein. 3 residues coordinate Zn(2+): D220, D231, and H294. A protein is bound at residue H301. Zn(2+) is bound by residues E327 and E358.

The protein belongs to the peptidase M24A family. Methionine aminopeptidase type 1 subfamily. In terms of assembly, associates with the 60S ribosomal subunit of the 80S translational complex. Zn(2+) serves as cofactor. Requires Co(2+) as cofactor. The cofactor is Mn(2+). Fe(2+) is required as a cofactor.

Its subcellular location is the cytoplasm. It catalyses the reaction Release of N-terminal amino acids, preferentially methionine, from peptides and arylamides.. Functionally, cotranslationally removes the N-terminal methionine from nascent proteins. The N-terminal methionine is often cleaved when the second residue in the primary sequence is small and uncharged (Met-Ala-, Cys, Gly, Pro, Ser, Thr, or Val). This Xenopus laevis (African clawed frog) protein is Methionine aminopeptidase 1 (metap1).